A 173-amino-acid polypeptide reads, in one-letter code: MHQVVCATTNPAKIQAILQAFHEIFGEGSCHIASVAVESGVPEQPFGSEETRAGARNRVANARRLLPEADFWVAIEAGIDGDSTFSWVVIENASQRGEARSATLPLPAVILEKVREGEALGPVMSRYTGIDEIGRKEGAIGVFTAGKLTRASVYHQAVILALSPFHNAVYQAL.

Residue 8-13 (TTNPAK) coordinates substrate. Mg(2+)-binding residues include E38 and E68. 68-69 (EA) lines the substrate pocket.

This sequence belongs to the YjjX NTPase family. As to quaternary structure, homodimer. The cofactor is Mg(2+). Mn(2+) serves as cofactor.

The enzyme catalyses XTP + H2O = XDP + phosphate + H(+). It catalyses the reaction ITP + H2O = IDP + phosphate + H(+). Its function is as follows. Phosphatase that hydrolyzes non-canonical purine nucleotides such as XTP and ITP to their respective diphosphate derivatives. Probably excludes non-canonical purines from DNA/RNA precursor pool, thus preventing their incorporation into DNA/RNA and avoiding chromosomal lesions. The polypeptide is Inosine/xanthosine triphosphatase (yjjX) (Escherichia coli (strain ATCC 8739 / DSM 1576 / NBRC 3972 / NCIMB 8545 / WDCM 00012 / Crooks)).